Consider the following 300-residue polypeptide: B1 kinase (300 aa).

A Protein kinase domain is found at 16 to 282 (WVVGPLIGKG…ITMVNSLTYF (267 aa)). ATP contacts are provided by residues 22-30 (IGKGGFGSI) and K45. D147 acts as the Proton acceptor in catalysis.

This sequence belongs to the protein kinase superfamily. Ser/Thr protein kinase family. Poxviruses subfamily. In terms of assembly, interacts with host JIP1; this interaction increases the amount of MAPK bound to JIP1 and subsequently increases the activity of transcription factors, such as JUN, that respond to these complexes. Interacts with protein OPG198; this interaction inhibits the repressive activity of OPG198 pseudokinase on viral replication factory formation. The cofactor is Mg(2+). Post-translationally, autophosphorylated.

The protein resides in the virion. The protein localises to the host cytoplasm. It carries out the reaction L-seryl-[protein] + ATP = O-phospho-L-seryl-[protein] + ADP + H(+). It catalyses the reaction L-threonyl-[protein] + ATP = O-phospho-L-threonyl-[protein] + ADP + H(+). Functionally, essential serine/threonine-protein kinase that plays different role in the viral life cycle. Phosphorylates the host small ribosomal protein RACK1 thereby customizing the ribosomes to a state optimal for viral mRNAs (which contain poly-A leaders) but not for host mRNAs. Facilitates viral DNA replication by inhibiting host BANF1, a cellular host defense responsive to foreign DNA. Phosphorylates host BANF1 on serine and threonine residues; this leads to BANF1 relocalization to the cytoplasm, loss of dimerization and impaired DNA binding activity. Indeed, BANF1 activity depends on its DNA-binding property which is blocked by VPK1-mediated phosphorylation. Required for viral intermediate genes expression, probably by inhibiting host BANF1. Modulates cellular responses via host JUN by two different mechanisms, either by direct phosphorylation or by modulation of upstream JIP1-MAPK complexes. Seems to participate in the accumulation/processing of late proteins and thus in virion maturation. In addition, inhibits B12 repressive activity on viral DNA replication via a phosphorylation-dependent mechanism. This is B1 kinase (OPG187) from Homo sapiens (Human).